A 467-amino-acid polypeptide reads, in one-letter code: MRLPREIGPIHFVGIGGIGMSGIAEVLCNLGYTVQGSDASEGANVVRLRDKGIKVTVGHRAENVSGADVLVVSTAIRRDNPELMAARAQRIPVVRRAEMLAELMRLKSCVAIAGTHGKTTTTSMVAALLDAGDFDPTVINGGIINAYGTNARLGAGEWMVVEADESDGTFLKLPTDVAIVTNVDPEHLDHFKTFDAVQDAFRSFVENVPFYGFAVMCIDHPVVQSMVGRIEDRRIVTYGENPQADARLVDLAPNGGGSHFKVVFRNRKTDAAHEVSDLVLPMPGRHNALNATAAIAVAHELGIPDATIRKAIAAFGGVKRRFTKTGEWNGVTIIDDYGHHPVEIAAVLKAARESTGGKVVAVVQPHRYTRLQSLFEEFCTCFNDADTVVVAEVYPAGEAPIAGIDRDHFVLGLRAHGHREVVPLQEPAALAGVIAGLAKPGDYVVCLGAGNITQWAYALPGELKALG.

114–120 lines the ATP pocket; sequence GTHGKTT.

This sequence belongs to the MurCDEF family.

The protein localises to the cytoplasm. The enzyme catalyses UDP-N-acetyl-alpha-D-muramate + L-alanine + ATP = UDP-N-acetyl-alpha-D-muramoyl-L-alanine + ADP + phosphate + H(+). Its pathway is cell wall biogenesis; peptidoglycan biosynthesis. Its function is as follows. Cell wall formation. This Nitrobacter hamburgensis (strain DSM 10229 / NCIMB 13809 / X14) protein is UDP-N-acetylmuramate--L-alanine ligase.